Here is a 366-residue protein sequence, read N- to C-terminus: DNA replication and repair protein RecF (366 aa).

Residue 30-37 participates in ATP binding; that stretch reads GDNGMGKT.

This sequence belongs to the RecF family.

It is found in the cytoplasm. In terms of biological role, the RecF protein is involved in DNA metabolism; it is required for DNA replication and normal SOS inducibility. RecF binds preferentially to single-stranded, linear DNA. It also seems to bind ATP. This chain is DNA replication and repair protein RecF, found in Azobacteroides pseudotrichonymphae genomovar. CFP2.